A 107-amino-acid polypeptide reads, in one-letter code: Iron-binding protein IscA (107 aa).

C35, C99, and C101 together coordinate Fe cation.

Belongs to the HesB/IscA family. In terms of assembly, homodimer; may form tetramers and higher multimers. Fe cation is required as a cofactor.

Its function is as follows. Is able to transfer iron-sulfur clusters to apo-ferredoxin. Multiple cycles of [2Fe2S] cluster formation and transfer are observed, suggesting that IscA acts catalytically. Recruits intracellular free iron so as to provide iron for the assembly of transient iron-sulfur cluster in IscU in the presence of IscS, L-cysteine and the thioredoxin reductase system TrxA/TrxB. This chain is Iron-binding protein IscA, found in Proteus mirabilis (strain HI4320).